A 768-amino-acid polypeptide reads, in one-letter code: Probable beta-glucosidase M (768 aa).

The N-terminal stretch at 1 to 19 (MHAIAGLTGLLAGVSLSYA) is a signal peptide. Residues N25, N72, and N259 are each glycosylated (N-linked (GlcNAc...) asparagine). Residue D287 is part of the active site. N-linked (GlcNAc...) asparagine glycosylation is found at N315, N322, N394, N434, N472, N543, and N651.

This sequence belongs to the glycosyl hydrolase 3 family.

It localises to the secreted. The enzyme catalyses Hydrolysis of terminal, non-reducing beta-D-glucosyl residues with release of beta-D-glucose.. It participates in glycan metabolism; cellulose degradation. Functionally, beta-glucosidases are one of a number of cellulolytic enzymes involved in the degradation of cellulosic biomass. Catalyzes the last step releasing glucose from the inhibitory cellobiose. The polypeptide is Probable beta-glucosidase M (bglM) (Aspergillus oryzae (strain ATCC 42149 / RIB 40) (Yellow koji mold)).